We begin with the raw amino-acid sequence, 435 residues long: UPF0761 membrane protein mma_2179 (435 aa).

6 helical membrane-spanning segments follow: residues 45 to 65, 103 to 123, 142 to 162, 177 to 197, 208 to 228, and 252 to 272; these read VLAL…FPLF, LSAF…LMID, ILVY…SMTF, VPFV…MVAF, LVEW…FEIV, and FPIF…GAVV.

This sequence belongs to the UPF0761 family.

Its subcellular location is the cell inner membrane. This chain is UPF0761 membrane protein mma_2179, found in Janthinobacterium sp. (strain Marseille) (Minibacterium massiliensis).